The primary structure comprises 533 residues: Tyrosine/DOPA decarboxylase 3 (533 aa).

N6-(pyridoxal phosphate)lysine is present on K319.

This sequence belongs to the group II decarboxylase family. Homodimer. It depends on pyridoxal 5'-phosphate as a cofactor. As to expression, roots.

It catalyses the reaction L-tyrosine + H(+) = tyramine + CO2. The enzyme catalyses L-dopa + H(+) = dopamine + CO2. It carries out the reaction 5-hydroxy-L-tryptophan + H(+) = serotonin + CO2. Functionally, marginally higher substrate specificity for L-DOPA over L-tyrosine. In Papaver somniferum (Opium poppy), this protein is Tyrosine/DOPA decarboxylase 3 (TYDC3).